The sequence spans 316 residues: Probable cell division protein WhiA (316 aa).

The H-T-H motif DNA-binding region spans 274–308 (SLKELGEMVSTGVISKSGVNHRLRKIDEIAEKLRN).

This sequence belongs to the WhiA family.

In terms of biological role, involved in cell division and chromosome segregation. The chain is Probable cell division protein WhiA from Macrococcus caseolyticus (strain JCSC5402) (Macrococcoides caseolyticum).